Reading from the N-terminus, the 382-residue chain is Alkane 1-monooxygenase 1 (382 aa).

The next 4 helical transmembrane spans lie at 10-30 (MLAIKKYAYWLWLLLALSMPF), 43-63 (FWAFSLVIAVFGIGPLLDMLF), 90-110 (LATVPVLIGTLVWAAGVFVAF), and 121-141 (WILSMGTVMGAVGIVVAHELI). 2 residues coordinate Fe cation: His138 and His142. A helical transmembrane segment spans residues 146–166 (ALEQAAGGILLAAVCYAGFKV). Fe cation is bound by residues His168, His172, and His173. The chain crosses the membrane as a helical span at residues 236–256 (LALLVGFGWAFGWLGMVFFLG). Residues His312, His315, and His316 each coordinate Fe cation.

This sequence belongs to the fatty acid desaturase type 1 family. AlkB subfamily. The cofactor is Fe(3+).

The protein resides in the cell inner membrane. The enzyme catalyses octane + 2 reduced [rubredoxin] + O2 + 2 H(+) = 2 oxidized [rubredoxin] + octan-1-ol + H2O. It functions in the pathway hydrocarbon metabolism; alkane degradation. Catalyzes the hydroxylation of n-alkanes in the presence of a NADH-rubredoxin reductase and rubredoxin. It preferably hydroxylases C16-C24 hydrocarbons. The chain is Alkane 1-monooxygenase 1 (alkB1) from Pseudomonas aeruginosa (strain ATCC 15692 / DSM 22644 / CIP 104116 / JCM 14847 / LMG 12228 / 1C / PRS 101 / PAO1).